The chain runs to 296 residues: Homoserine kinase (296 aa).

85–95 provides a ligand contact to ATP; sequence PVARGLGSSAA.

Belongs to the GHMP kinase family. Homoserine kinase subfamily.

The protein resides in the cytoplasm. It catalyses the reaction L-homoserine + ATP = O-phospho-L-homoserine + ADP + H(+). It participates in amino-acid biosynthesis; L-threonine biosynthesis; L-threonine from L-aspartate: step 4/5. Its function is as follows. Catalyzes the ATP-dependent phosphorylation of L-homoserine to L-homoserine phosphate. In Moorella thermoacetica (strain ATCC 39073 / JCM 9320), this protein is Homoserine kinase.